Here is a 495-residue protein sequence, read N- to C-terminus: Glucokinase (495 aa).

Residues 3–483 (SALLDEAARI…SGVGAALIAL (481 aa)) form the Hexokinase domain. A hexokinase small subdomain region spans residues 57 to 206 (NGTEKGLYLA…GLPVRVAALV (150 aa)). Residue K93 coordinates ATP. Residues 149–175 (DLGFTFSFPVRQLGINKGTLIRWTKGF) form a glucose-binding region. The tract at residues 207-472 (NDTVGTLMAR…KKIRIGISKD (266 aa)) is hexokinase large subdomain. 472–477 (DGSGVG) contributes to the ATP binding site.

It belongs to the hexokinase family. In terms of assembly, monomer.

The enzyme catalyses D-glucose + ATP = D-glucose 6-phosphate + ADP + H(+). It catalyses the reaction a D-hexose + ATP = a D-hexose 6-phosphate + ADP + H(+). The catalysed reaction is D-mannose + ATP = D-mannose 6-phosphate + ADP + H(+). It carries out the reaction D-glucosamine + ATP = D-glucosamine 6-phosphate + ADP + H(+). Its pathway is carbohydrate metabolism; hexose metabolism. It participates in carbohydrate degradation; glycolysis; D-glyceraldehyde 3-phosphate and glycerone phosphate from D-glucose: step 1/4. Functionally, the enzyme has great affinity for glucose. Mannose, 2-deoxyglucose and glucosamine can serve as substrates. The sequence is that of Glucokinase (glkA) from Aspergillus niger.